Reading from the N-terminus, the 535-residue chain is Flavin-containing monooxygenase 1 (535 aa).

Position 2 is an N-acetylalanine (Ala2). At 2 to 513 (AKRVAIVGAG…TRIVQESSSP (512 aa)) the chain is on the lumenal side. Residues 9–13 (GAGVS), Glu32, 40–41 (LW), and 61–62 (NS) each bind FAD. Residues 60–61 (SN) and 195–198 (SGTD) contribute to the NADP(+) site. Residues 514–534 (FESLLKLFAVLALLVSVFLIF) traverse the membrane as a helical segment. Position 535 (Leu535) is a topological domain, cytoplasmic.

This sequence belongs to the FMO family. The cofactor is FAD. Liver.

The protein localises to the endoplasmic reticulum membrane. The enzyme catalyses hypotaurine + NADPH + O2 + H(+) = taurine + NADP(+) + H2O. The catalysed reaction is hypotaurine + NADH + O2 + H(+) = taurine + NAD(+) + H2O. It carries out the reaction trimethylamine + NADPH + O2 = trimethylamine N-oxide + NADP(+) + H2O. It catalyses the reaction N,N-dimethylaniline + NADPH + O2 + H(+) = N,N-dimethylaniline N-oxide + NADP(+) + H2O. In terms of biological role, broad spectrum monooxygenase that catalyzes the oxygenation of a wide variety of nitrogen- and sulfur-containing compounds including xenobiotics. Catalyzes the S-oxygenation of hypotaurine to produce taurine, an organic osmolyte involved in cell volume regulation as well as a variety of cytoprotective and developmental processes. In vitro, catalyzes the N-oxygenation of trimethylamine (TMA) to produce trimethylamine N-oxide (TMAO) and could therefore participate to the detoxification of this compound that is generated by the action of gut microbiota from dietary precursors such as choline, choline containing compounds, betaine or L-carnitine. This chain is Flavin-containing monooxygenase 1 (FMO1), found in Oryctolagus cuniculus (Rabbit).